The primary structure comprises 565 residues: Mediator of RNA polymerase II transcription subunit 17 (565 aa).

The segment covering Thr-138–Asn-152 has biased composition (polar residues). A disordered region spans residues Thr-138–Ser-160.

It belongs to the Mediator complex subunit 17 family. Component of the Mediator complex.

It localises to the nucleus. Its function is as follows. Component of the Mediator complex, a coactivator involved in the regulated transcription of nearly all RNA polymerase II-dependent genes. Mediator functions as a bridge to convey information from gene-specific regulatory proteins to the basal RNA polymerase II transcription machinery. Mediator is recruited to promoters by direct interactions with regulatory proteins and serves as a scaffold for the assembly of a functional preinitiation complex with RNA polymerase II and the general transcription factors. The sequence is that of Mediator of RNA polymerase II transcription subunit 17 (SRB4) from Candida albicans (strain SC5314 / ATCC MYA-2876) (Yeast).